A 32-amino-acid polypeptide reads, in one-letter code: Yop proteins translocation protein A (32 aa).

The polypeptide is Yop proteins translocation protein A (yscA) (Yersinia pestis).